Reading from the N-terminus, the 337-residue chain is MYNTDVVIIGAGPVGLFAVFQAGMFGMKCHVIDAQETIGGQCITLYPEKPIYDIPAYPKIVAEELIKQLELQAAPFKPVYHLNQQAIELNKQGDFFEIKTSKNTLIKSKIIIIAAGAGSFGPNKPPLANIEDFEGKSVFYFINDKNKFTGKNIVIAGGGDSAVDWAISLSEIANKIYLVHRRDKFTASPESVRQLRNLAETGKIELVIGYQLNALDGNNGELQSVIVRDLQNNTHKLEANILLPFFGLKQNLGSLANWGLNVKLQHIEVDNSYYQTNIEGIYAIGDIAHYTGKLKLILIGFAEAASSLHHAYSRVFDGKALHFEYSTTKYGKNGKKK.

FAD-binding residues include aspartate 33, glutamine 41, tyrosine 46, alanine 86, phenylalanine 120, aspartate 286, and threonine 327.

It belongs to the ferredoxin--NADP reductase type 2 family. As to quaternary structure, homodimer. It depends on FAD as a cofactor.

The catalysed reaction is 2 reduced [2Fe-2S]-[ferredoxin] + NADP(+) + H(+) = 2 oxidized [2Fe-2S]-[ferredoxin] + NADPH. The polypeptide is Ferredoxin--NADP reductase (Rickettsia canadensis (strain McKiel)).